The sequence spans 101 residues: Small ribosomal subunit protein uS14A (101 aa).

Residues 29–73 (AIISSPSTPADARAAAQSELNRQPRDASPVRVRNRDAVDGRPRGH) are disordered. Positions 61–70 (RNRDAVDGRP) are enriched in basic and acidic residues.

The protein belongs to the universal ribosomal protein uS14 family. In terms of assembly, part of the 30S ribosomal subunit. Contacts proteins S3 and S10.

Binds 16S rRNA, required for the assembly of 30S particles and may also be responsible for determining the conformation of the 16S rRNA at the A site. The sequence is that of Small ribosomal subunit protein uS14A from Mycolicibacterium gilvum (strain PYR-GCK) (Mycobacterium gilvum (strain PYR-GCK)).